Consider the following 192-residue polypeptide: Crossover junction endodeoxyribonuclease RuvC (192 aa).

Residues D8, E67, and D139 contribute to the active site. Residues D8, E67, and D139 each coordinate Mg(2+).

It belongs to the RuvC family. As to quaternary structure, homodimer which binds Holliday junction (HJ) DNA. The HJ becomes 2-fold symmetrical on binding to RuvC with unstacked arms; it has a different conformation from HJ DNA in complex with RuvA. In the full resolvosome a probable DNA-RuvA(4)-RuvB(12)-RuvC(2) complex forms which resolves the HJ. It depends on Mg(2+) as a cofactor.

The protein resides in the cytoplasm. The catalysed reaction is Endonucleolytic cleavage at a junction such as a reciprocal single-stranded crossover between two homologous DNA duplexes (Holliday junction).. In terms of biological role, the RuvA-RuvB-RuvC complex processes Holliday junction (HJ) DNA during genetic recombination and DNA repair. Endonuclease that resolves HJ intermediates. Cleaves cruciform DNA by making single-stranded nicks across the HJ at symmetrical positions within the homologous arms, yielding a 5'-phosphate and a 3'-hydroxyl group; requires a central core of homology in the junction. The consensus cleavage sequence is 5'-(A/T)TT(C/G)-3'. Cleavage occurs on the 3'-side of the TT dinucleotide at the point of strand exchange. HJ branch migration catalyzed by RuvA-RuvB allows RuvC to scan DNA until it finds its consensus sequence, where it cleaves and resolves the cruciform DNA. This chain is Crossover junction endodeoxyribonuclease RuvC, found in Actinobacillus pleuropneumoniae serotype 5b (strain L20).